A 186-amino-acid polypeptide reads, in one-letter code: Negative modulator of initiation of replication (186 aa).

The interval 93-94 (AV) is interaction with DNA.

Belongs to the SeqA family. As to quaternary structure, homodimer. Polymerizes to form helical filaments.

The protein localises to the cytoplasm. Its function is as follows. Negative regulator of replication initiation, which contributes to regulation of DNA replication and ensures that replication initiation occurs exactly once per chromosome per cell cycle. Binds to pairs of hemimethylated GATC sequences in the oriC region, thus preventing assembly of replication proteins and re-initiation at newly replicated origins. Repression is relieved when the region becomes fully methylated. The sequence is that of Negative modulator of initiation of replication from Shewanella halifaxensis (strain HAW-EB4).